The primary structure comprises 217 residues: Large ribosomal subunit protein uL3 (217 aa).

Belongs to the universal ribosomal protein uL3 family. Part of the 50S ribosomal subunit. Forms a cluster with proteins L14 and L19.

In terms of biological role, one of the primary rRNA binding proteins, it binds directly near the 3'-end of the 23S rRNA, where it nucleates assembly of the 50S subunit. The chain is Large ribosomal subunit protein uL3 from Brachyspira hyodysenteriae (strain ATCC 49526 / WA1).